A 126-amino-acid chain; its full sequence is L-alanine exporter AlaE (126 aa).

The chain crosses the membrane as a helical span at residues 23-43 (FALVVYCFFTGMAIEILLSGM).

This sequence belongs to the AlaE exporter family.

It is found in the cell inner membrane. In terms of biological role, exports L-alanine. This chain is L-alanine exporter AlaE, found in Sodalis glossinidius (strain morsitans).